Consider the following 102-residue polypeptide: Large ribosomal subunit protein uL24 (102 aa).

This sequence belongs to the universal ribosomal protein uL24 family. Part of the 50S ribosomal subunit.

One of two assembly initiator proteins, it binds directly to the 5'-end of the 23S rRNA, where it nucleates assembly of the 50S subunit. Its function is as follows. One of the proteins that surrounds the polypeptide exit tunnel on the outside of the subunit. In Paraburkholderia phytofirmans (strain DSM 17436 / LMG 22146 / PsJN) (Burkholderia phytofirmans), this protein is Large ribosomal subunit protein uL24.